The primary structure comprises 305 residues: Oxygen-dependent coproporphyrinogen-III oxidase (305 aa).

Position 99 (Ser-99) interacts with substrate. The a divalent metal cation site is built by His-103 and His-113. His-113 functions as the Proton donor in the catalytic mechanism. Residue 115–117 (NVR) coordinates substrate. His-152 and His-182 together coordinate a divalent metal cation. An important for dimerization region spans residues 247–282 (YVEFNLVLDRGTLFGLQTGGRTESILMSMPPLARWE). 265–267 (GGR) lines the substrate pocket.

Belongs to the aerobic coproporphyrinogen-III oxidase family. In terms of assembly, homodimer. A divalent metal cation serves as cofactor.

It is found in the cytoplasm. It catalyses the reaction coproporphyrinogen III + O2 + 2 H(+) = protoporphyrinogen IX + 2 CO2 + 2 H2O. It functions in the pathway porphyrin-containing compound metabolism; protoporphyrin-IX biosynthesis; protoporphyrinogen-IX from coproporphyrinogen-III (O2 route): step 1/1. Involved in the heme biosynthesis. Catalyzes the aerobic oxidative decarboxylation of propionate groups of rings A and B of coproporphyrinogen-III to yield the vinyl groups in protoporphyrinogen-IX. The protein is Oxygen-dependent coproporphyrinogen-III oxidase of Vibrio cholerae serotype O1 (strain ATCC 39541 / Classical Ogawa 395 / O395).